The following is a 268-amino-acid chain: F-actin-capping protein subunit beta (268 aa).

Belongs to the F-actin-capping protein beta subunit family. In terms of assembly, component of the F-actin capping complex, composed of a heterodimer of an alpha and a beta subunit.

The protein localises to the cytoplasm. It is found in the cytoskeleton. The protein resides in the actin patch. Its subcellular location is the nucleus. Functionally, F-actin-capping proteins bind in a Ca(2+)-independent manner to the fast growing ends of actin filaments (barbed end) thereby blocking the exchange of subunits at these ends. Unlike other capping proteins (such as gelsolin and severin), these proteins do not sever actin filaments. Competes with formin cdc12 for attachment to the actin filaments barbed ends. Slowly replaces cdc12 on the barbed ends in preparation for filament disassembly during contractile ring constriction. This Schizosaccharomyces pombe (strain 972 / ATCC 24843) (Fission yeast) protein is F-actin-capping protein subunit beta (acp2).